Here is a 170-residue protein sequence, read N- to C-terminus: CASP-like protein 1F1 (170 aa).

The Cytoplasmic segment spans residues 1 to 16; the sequence is MMGDNEGRRTPLLNLG. The chain crosses the membrane as a helical span at residues 17–37; it reads VQVSMRVLIIGAAMASMWVMI. Topologically, residues 38 to 62 are extracellular; sequence TNREVASVYGIAFEAKYSYSSAFRY. A helical membrane pass occupies residues 63-83; sequence LVYAQIAVCAATLFTLVWACL. Topologically, residues 84–88 are cytoplasmic; that stretch reads AVRRR. A helical membrane pass occupies residues 89-109; sequence GLVFALFFFDLLTTLTAISAF. The Extracellular segment spans residues 110 to 141; it reads SAAFAEGYVGKYGNKQAGWLPICGYVHVYCSR. The helical transmembrane segment at 142–162 threads the bilayer; sequence VTISLAMSFASFVLLFILTVL. Topologically, residues 163 to 170 are cytoplasmic; the sequence is TASSARHY.

Belongs to the Casparian strip membrane proteins (CASP) family. Homodimer and heterodimers.

It localises to the cell membrane. The chain is CASP-like protein 1F1 from Arabidopsis lyrata subsp. lyrata (Lyre-leaved rock-cress).